Consider the following 178-residue polypeptide: Anthranilate synthase component 2 (178 aa).

One can recognise a Glutamine amidotransferase type-1 domain in the interval 1–178 (MIVVVDCKDS…RNFVEMCHDG (178 aa)). 49–51 (GPG) serves as a coordination point for L-glutamine. C71 (nucleophile; for GATase activity) is an active-site residue. Residues Q75 and 120-121 (SL) each bind L-glutamine. Residues H155 and E157 each act as for GATase activity in the active site.

As to quaternary structure, heterotetramer consisting of two non-identical subunits: a beta subunit (TrpG) and a large alpha subunit (TrpE).

The enzyme catalyses chorismate + L-glutamine = anthranilate + pyruvate + L-glutamate + H(+). Its pathway is amino-acid biosynthesis; L-tryptophan biosynthesis; L-tryptophan from chorismate: step 1/5. Its function is as follows. Part of a heterotetrameric complex that catalyzes the two-step biosynthesis of anthranilate, an intermediate in the biosynthesis of L-tryptophan. In the first step, the glutamine-binding beta subunit (TrpG) of anthranilate synthase (AS) provides the glutamine amidotransferase activity which generates ammonia as a substrate that, along with chorismate, is used in the second step, catalyzed by the large alpha subunit of AS (TrpE) to produce anthranilate. In the absence of TrpG, TrpE can synthesize anthranilate directly from chorismate and high concentrations of ammonia. This Archaeoglobus fulgidus (strain ATCC 49558 / DSM 4304 / JCM 9628 / NBRC 100126 / VC-16) protein is Anthranilate synthase component 2 (trpG).